The sequence spans 199 residues: uncharacterized protein (199 aa).

Positions E72–E116 form a coiled coil. Positions T98–G117 are enriched in basic and acidic residues. Residues T98 to Y127 are disordered.

This is an uncharacterized protein from Caenorhabditis elegans.